The sequence spans 300 residues: Estradiol 17-beta-dehydrogenase 11 (300 aa).

Positions 1–19 (MKFLLDVLLLLPLLIVCSL) are cleaved as a signal peptide. 40 to 64 (LITGAGHGIGRLTAYEFAKLKSKLV) contributes to the NADP(+) binding site. Ser-172 is a binding site for substrate. Tyr-185 serves as the catalytic Proton acceptor.

This sequence belongs to the short-chain dehydrogenases/reductases (SDR) family. 17-beta-HSD 3 subfamily.

It localises to the endoplasmic reticulum. Its subcellular location is the lipid droplet. The catalysed reaction is 17beta-estradiol + NAD(+) = estrone + NADH + H(+). It catalyses the reaction 17beta-estradiol + NADP(+) = estrone + NADPH + H(+). Can convert androstan-3-alpha,17-beta-diol (3-alpha-diol) to androsterone in vitro, suggesting that it may participate in androgen metabolism during steroidogenesis. May act by metabolizing compounds that stimulate steroid synthesis and/or by generating metabolites that inhibit it. Has no activity toward DHEA (dehydroepiandrosterone), or A-dione (4-androste-3,17-dione), and only a slight activity toward testosterone to A-dione. This is Estradiol 17-beta-dehydrogenase 11 (HSD17B11) from Pongo abelii (Sumatran orangutan).